A 461-amino-acid chain; its full sequence is MLKIFNTLSRQKEEFKPIHAGKVGMYVCGITIYDLCHIGHGRTFVAFDVVARYLRYLGYSLTYVRNVTDVDDKIIKRAIENNETCEQLTTRMLAEMHKDFDALNLERPDLEPRATHHIAEIIEMTERLIARGHAYVASNGDVMFAVDSDPDYGVLSRQDLDQLQAGARVEVADVKRNPMDFVLWKMSKPGEPRWESPWGPGRPGWHIECSAMNGKQLGAHFDIHGGGSDLMFPHHENEIAQSTCAHDGPYVNYWMHSGMVMIDKEKMSKSLNNFFTIRDVLAYYDAETVRYFLMSGHYRSQLNYSEENLKQARASLERLYTALRGTDANATPAGGVEFEARFRTAMDDDFNTPEAYSVLFDIAREVNRLKNEDMAAANGLAAELRKLAQVLGLLEQDPELFLQGGAQADDDEVAKIEALIKQRNDARSSKDWALADAARDQLNDLGIVLEDGPQGTTWRRK.

Residue Cys-28 participates in Zn(2+) binding. A 'HIGH' region motif is present at residues Ile-30 to His-40. Residues Cys-209, His-234, and Glu-238 each coordinate Zn(2+). The 'KMSKS' region motif lies at Lys-266–Ser-270. Lys-269 is a binding site for ATP.

Belongs to the class-I aminoacyl-tRNA synthetase family. Monomer. Zn(2+) serves as cofactor.

Its subcellular location is the cytoplasm. The enzyme catalyses tRNA(Cys) + L-cysteine + ATP = L-cysteinyl-tRNA(Cys) + AMP + diphosphate. This is Cysteine--tRNA ligase from Yersinia pseudotuberculosis serotype O:3 (strain YPIII).